Reading from the N-terminus, the 403-residue chain is Acetate kinase (403 aa).

N7 contacts Mg(2+). K14 contacts ATP. Residue R90 participates in substrate binding. The active-site Proton donor/acceptor is D147. Residues 207–211, 283–285, and 331–335 each bind ATP; these read HIGNG, DMR, and GVGEN. Position 386 (E386) interacts with Mg(2+).

The protein belongs to the acetokinase family. In terms of assembly, homodimer. Mg(2+) serves as cofactor. It depends on Mn(2+) as a cofactor.

It localises to the cytoplasm. It carries out the reaction acetate + ATP = acetyl phosphate + ADP. Its pathway is metabolic intermediate biosynthesis; acetyl-CoA biosynthesis; acetyl-CoA from acetate: step 1/2. Its function is as follows. Catalyzes the formation of acetyl phosphate from acetate and ATP. Can also catalyze the reverse reaction. Phosphorylates propionate (54%) in addition to acetate (100%). Uses GTP (100%), ITP (163%), UTP (56%), and CTP (21%) as phosphoryl donors in addition to ATP (100%). The chain is Acetate kinase from Thermotoga maritima (strain ATCC 43589 / DSM 3109 / JCM 10099 / NBRC 100826 / MSB8).